The following is a 122-amino-acid chain: Large ribosomal subunit protein uL14c (122 aa).

Belongs to the universal ribosomal protein uL14 family. As to quaternary structure, part of the 50S ribosomal subunit.

It is found in the plastid. Its function is as follows. Binds to 23S rRNA. The chain is Large ribosomal subunit protein uL14c from Cuscuta obtusiflora (Peruvian dodder).